Consider the following 464-residue polypeptide: MMLLYYALSFILLPVYFIIILIRLLIGKEDIRRIQERFAIGKHRQDDSLDFMQTSANKEEFKGDTSLRTTTYTLIREDEGLGSTYKLPLEASDARRLIWINAASIGESMVALTLIHNISKRYPDVRFLVTSWTNSSAKILTAKLPKIAVHQFLPIDNIIFTRKFLRNWQPDLGIFIESELWPCTINEGAKQCKLLLVNARISDKSFKAWLQRKSFFQLILKNCSKIIVQSERDLQKFNELGVSDAVNLGNIKFANEKLPVNQEELSKLSLHLDNKRVVLFASTHPEDEEVILPIIKNLKEQFLDCYIILIPRHPERVKSIIDNCKSHNLSATAKSQNDLPVLSDDLYIVDRFGEMGLFFSVATISFIGGSFKQGGHNILEAAYFSNCIIFGPDMSKNTDIAKGVLQNEAAIQIKNGEDLLTKLTYLLRSNNALELTTYRENALKFIKDNQKVLDEYLNVITKFL.

The helical; Signal-anchor transmembrane segment at 2–22 threads the bilayer; it reads MLLYYALSFILLPVYFIIILI. The RPE1 insert domain occupies 47–93; it reads DSLDFMQTSANKEEFKGDTSLRTTTYTLIREDEGLGSTYKLPLEASD. Glutamate 107 functions as the Proton acceptor in the catalytic mechanism. Residues 311 to 312, 352 to 354, and 377 to 380 each bind CMP; these read PR, FGE, and NILE.

This sequence belongs to the glycosyltransferase group 1 family. Glycosyltransferase 30 subfamily.

It is found in the cell inner membrane. The enzyme catalyses lipid IVA (E. coli) + CMP-3-deoxy-beta-D-manno-octulosonate = alpha-Kdo-(2-&gt;6)-lipid IVA (E. coli) + CMP + H(+). It functions in the pathway bacterial outer membrane biogenesis; LPS core biosynthesis. Its function is as follows. Involved in lipopolysaccharide (LPS) biosynthesis. Catalyzes the transfer of 3-deoxy-D-manno-octulosonate (Kdo) residue(s) from CMP-Kdo to lipid IV(A), the tetraacyldisaccharide-1,4'-bisphosphate precursor of lipid A. This chain is 3-deoxy-D-manno-octulosonic acid transferase (waaA), found in Rickettsia conorii (strain ATCC VR-613 / Malish 7).